The primary structure comprises 232 residues: Probable ADP-ribosylation factor GTPase-activating protein AGD15 (232 aa).

The Arf-GAP domain maps to 16–130 (SKILEALLKH…RWVSPGAIQP (115 aa)). The C4-type zinc finger occupies 31–54 (CADCRSKAPRWASVNLGIFICMQC). The interval 203–232 (PNQKNENFSSEVNQNRRTTIAPPSSWATFD) is disordered. The span at 206 to 232 (KNENFSSEVNQNRRTTIAPPSSWATFD) shows a compositional bias: polar residues.

In terms of biological role, GTPase-activating protein (GAP) for ADP ribosylation factor (ARF). This Arabidopsis thaliana (Mouse-ear cress) protein is Probable ADP-ribosylation factor GTPase-activating protein AGD15 (AGD15).